Consider the following 199-residue polypeptide: Recombination protein RecR (199 aa).

The segment at 56–71 (CAVCGNIAEETQCRIC) adopts a C4-type zinc-finger fold. One can recognise a Toprim domain in the interval 79–174 (TVICVVEEPK…KVTRLASGLP (96 aa)).

This sequence belongs to the RecR family.

Functionally, may play a role in DNA repair. It seems to be involved in an RecBC-independent recombinational process of DNA repair. It may act with RecF and RecO. The polypeptide is Recombination protein RecR (Thermobifida fusca (strain YX)).